Here is a 618-residue protein sequence, read N- to C-terminus: 1-deoxy-D-xylulose-5-phosphate synthase (618 aa).

Thiamine diphosphate contacts are provided by residues His72 and 113 to 115 (GHA). Asp144 contacts Mg(2+). Residues 145–146 (GA), Asn173, His284, and Glu359 contribute to the thiamine diphosphate site. Asn173 is a Mg(2+) binding site.

The protein belongs to the transketolase family. DXPS subfamily. As to quaternary structure, homodimer. Requires Mg(2+) as cofactor. The cofactor is thiamine diphosphate.

It catalyses the reaction D-glyceraldehyde 3-phosphate + pyruvate + H(+) = 1-deoxy-D-xylulose 5-phosphate + CO2. Its pathway is metabolic intermediate biosynthesis; 1-deoxy-D-xylulose 5-phosphate biosynthesis; 1-deoxy-D-xylulose 5-phosphate from D-glyceraldehyde 3-phosphate and pyruvate: step 1/1. In terms of biological role, catalyzes the acyloin condensation reaction between C atoms 2 and 3 of pyruvate and glyceraldehyde 3-phosphate to yield 1-deoxy-D-xylulose-5-phosphate (DXP). The chain is 1-deoxy-D-xylulose-5-phosphate synthase from Dictyoglomus thermophilum (strain ATCC 35947 / DSM 3960 / H-6-12).